We begin with the raw amino-acid sequence, 202 residues long: MDTETEFDRILLFEQIRQDAENTYKSNPLDADNLTRWGGVLLELSQFHSISDAKQMIQEAITKFEEALLIDPKKDEAVWCIGNAYTSFAFLTPDETEAKHNFDLATQFFQQAVDEQPDNTHYLKSLEMTAKAPQLHAEAYKQGLGSQPMGRVEAPAPPSSKAVKNKKSSDAKYDAMGWVILAIGVVAWISFAKANVPVSPPR.

Position 1 is an N-acetylmethionine (M1). Residues M1–D174 lie on the Cytoplasmic side of the membrane. 2 TPR repeats span residues G38 to K74 and T86 to N119. Residues S146–K166 are disordered. Residues A175–A192 form a helical membrane-spanning segment. The Mitochondrial intermembrane segment spans residues K193–R202.

It belongs to the Tom20 family. In terms of assembly, forms part of the preprotein translocase complex of the outer mitochondrial membrane (TOM complex) which consists of at least 6 different proteins (TOM5, TOM6, TOM7, TOM20, TOM22/TOM9 and TOM40). Component of a mitochondrial large protein complex that contains, at least, MIC60, DGS1, TOM40, TOM20 proteins, and petC/RISP. In terms of processing, the N-terminus is blocked. As to expression, expressed in roots, flowers, young cotyledons and leaves.

Its subcellular location is the mitochondrion outer membrane. Central component of the receptor complex responsible for the recognition and translocation of cytosolically synthesized mitochondrial preproteins. Together with TOM22 functions as the transit peptide receptor at the surface of the mitochondrion outer membrane and facilitates the movement of preproteins into the translocation pore. The protein is Mitochondrial import receptor subunit TOM20-3 of Arabidopsis thaliana (Mouse-ear cress).